We begin with the raw amino-acid sequence, 510 residues long: Histidine ammonia-lyase (510 aa).

The segment at residues alanine 143–glycine 145 is a cross-link (5-imidazolinone (Ala-Gly)). Position 144 is a 2,3-didehydroalanine (Ser) (serine 144).

The protein belongs to the PAL/histidase family. Contains an active site 4-methylidene-imidazol-5-one (MIO), which is formed autocatalytically by cyclization and dehydration of residues Ala-Ser-Gly.

It is found in the cytoplasm. It catalyses the reaction L-histidine = trans-urocanate + NH4(+). It functions in the pathway amino-acid degradation; L-histidine degradation into L-glutamate; N-formimidoyl-L-glutamate from L-histidine: step 1/3. This chain is Histidine ammonia-lyase, found in Yersinia pseudotuberculosis serotype I (strain IP32953).